The sequence spans 143 residues: Ribosome maturation factor RimP (143 aa).

This sequence belongs to the RimP family.

The protein localises to the cytoplasm. Required for maturation of 30S ribosomal subunits. The protein is Ribosome maturation factor RimP of Borrelia turicatae (strain 91E135).